Reading from the N-terminus, the 864-residue chain is Protein 4.1 (864 aa).

Polar residues-rich tracts occupy residues Met-1–His-16 and Asn-27–Thr-41. Disordered regions lie at residues Met-1–Leu-122, Glu-136–Ile-170, and Ile-182–Lys-202. A Phosphoserine modification is found at Ser-14. A Phosphothreonine; by CDK1 modification is found at Thr-60. Basic and acidic residues predominate over residues Pro-61–Glu-75. Low complexity predominate over residues Ser-76–Leu-87. Ser-84, Ser-85, Ser-95, Ser-104, Ser-121, Ser-149, Ser-151, Ser-152, Ser-188, and Ser-191 each carry phosphoserine. The segment covering Glu-101 to Glu-117 has biased composition (basic and acidic residues). Over residues Ser-149 to Ala-158 the composition is skewed to polar residues. Positions Ile-182–Ala-199 are enriched in basic and acidic residues. The 282-residue stretch at Met-210 to Ser-491 folds into the FERM domain. Phosphotyrosine is present on Tyr-222. Residue Thr-378 is modified to Phosphothreonine. The segment at Thr-494–Trp-614 is hydrophilic. Disordered regions lie at residues Arg-518–Gly-572 and Lys-586–Thr-611. Ser-521, Ser-540, Ser-542, and Ser-555 each carry phosphoserine. Over residues Ala-587–Asp-600 the composition is skewed to basic and acidic residues. Positions Glu-601–Pro-610 are enriched in acidic residues. Residues Lys-615–Pro-713 are spectrin--actin-binding. At Tyr-660 the chain carries Phosphotyrosine; by EGFR. A phosphoserine mark is found at Ser-664, Ser-674, Ser-684, and Ser-709. Ser-712 carries the phosphoserine; by CDK1 modification. The segment at Phe-714–Glu-864 is C-terminal (CTD). Residues Thr-736 and Thr-859 each carry the phosphothreonine modification.

As to quaternary structure, binds with a high affinity to glycophorin and with lower affinity to band III protein. Associates with the nuclear mitotic apparatus. Interacts with calmodulin. Interacts with CPAP. Interacts with DLG1. Also found to associate with contractile apparatus and tight junctions. Interacts with NUMA1; this interaction is negatively regulated by CDK1 during metaphase and promotes anaphase-specific localization of NUMA1 in symmetrically dividing cells. Interacts with ATP2B1; regulates small intestinal calcium absorption through regulation of membrane expression of ATP2B1. In terms of processing, phosphorylated at multiple sites by different protein kinases and each phosphorylation event selectively modulates the protein's functions. Post-translationally, phosphorylation on Tyr-660 reduces the ability of 4.1 to promote the assembly of the spectrin/actin/4.1 ternary complex. O-glycosylated; contains N-acetylglucosamine side chains in the C-terminal domain.

The protein resides in the cytoplasm. It localises to the cytoskeleton. It is found in the cell cortex. Its subcellular location is the nucleus. Functionally, protein 4.1 is a major structural element of the erythrocyte membrane skeleton. It plays a key role in regulating membrane physical properties of mechanical stability and deformability by stabilizing spectrin-actin interaction. Recruits DLG1 to membranes. Required for dynein-dynactin complex and NUMA1 recruitment at the mitotic cell cortex during anaphase. The polypeptide is Protein 4.1 (Homo sapiens (Human)).